Here is a 381-residue protein sequence, read N- to C-terminus: Ceropsin (381 aa).

Residues 1–62 (MSISMDAGPG…MNPLWHALLG (62 aa)) lie on the Extracellular side of the membrane. N-linked (GlcNAc...) asparagine glycosylation is present at N28. The chain crosses the membrane as a helical span at residues 63-83 (FTIGVLGFISMMGNGMVIYIF). The Cytoplasmic segment spans residues 84–96 (MTTKNLKTPSNLL). A helical transmembrane segment spans residues 97-117 (VVNLAFSDFLMMCAMSPAMVI). Residues 118–133 (NCYNETWVFGPFACEL) lie on the Extracellular side of the membrane. N121 carries an N-linked (GlcNAc...) asparagine glycan. A disulfide bridge connects residues C131 and C208. Residues 134-154 (YGCAGSLFGCASIWTMTMIAF) form a helical membrane-spanning segment. Residues 155 to 173 (DRYNVIVKGIAAKPMTNNG) lie on the Cytoplasmic side of the membrane. A helical transmembrane segment spans residues 174 to 194 (ALLRILGIWAFSLAWTVAPFF). Topologically, residues 195–221 (GWNRYVPEGNMTACGTDYLTKDWFSRS) are extracellular. N-linked (GlcNAc...) asparagine glycosylation occurs at N204. Residues 222 to 242 (YIVVYSVFVYFAPLLLIVYSY) form a helical membrane-spanning segment. The Cytoplasmic segment spans residues 243 to 284 (YYIVQAVSAHEKAMREQAKKMNVASLRSSEAANTSTECKLAK). A helical transmembrane segment spans residues 285–305 (VALMTISLWFMAWTPYLVINY). Residues 306 to 316 (TGILESAPISP) lie on the Extracellular side of the membrane. Residues 317–339 (LATIWGSLFAKANAVYNPIVYGI) traverse the membrane as a helical segment. The Cytoplasmic portion of the chain corresponds to 340–381 (SHPKYQAALYKRFPVLQCHSTTTDEASSVASGTTVMEEKPTA).

The protein belongs to the G-protein coupled receptor 1 family. Opsin subfamily. In terms of tissue distribution, expressed bilaterally in dorsal and ventral anterior protocerebral cells and bilaterally in the dorsal posterior protocerebral and lateral posterior tritocerebral cells (at protein level). Expressed in the larval brain but not in the subesophageal ganglion or thoracic ganglion.

The protein resides in the membrane. Its function is as follows. Visual pigments are the light-absorbing molecules that mediate vision. They consist of an apoprotein, opsin, covalently linked to cis-retinal. May play a role in photoperiodic photoreception. This is Ceropsin from Bombyx mori (Silk moth).